The chain runs to 644 residues: Phosphomethylpyrimidine synthase (644 aa).

Residues asparagine 236, methionine 265, tyrosine 294, histidine 330, 350–352, 391–394, and glutamate 430 each bind substrate; these read SRG and DGLR. Histidine 434 contacts Zn(2+). Tyrosine 457 serves as a coordination point for substrate. Histidine 498 serves as a coordination point for Zn(2+). Residues cysteine 578, cysteine 581, and cysteine 586 each coordinate [4Fe-4S] cluster. Residues 623-644 are disordered; the sequence is RQKSEEFKASGSELYHPAVEAE.

The protein belongs to the ThiC family. In terms of assembly, homodimer. It depends on [4Fe-4S] cluster as a cofactor.

It catalyses the reaction 5-amino-1-(5-phospho-beta-D-ribosyl)imidazole + S-adenosyl-L-methionine = 4-amino-2-methyl-5-(phosphooxymethyl)pyrimidine + CO + 5'-deoxyadenosine + formate + L-methionine + 3 H(+). The protein operates within cofactor biosynthesis; thiamine diphosphate biosynthesis. In terms of biological role, catalyzes the synthesis of the hydroxymethylpyrimidine phosphate (HMP-P) moiety of thiamine from aminoimidazole ribotide (AIR) in a radical S-adenosyl-L-methionine (SAM)-dependent reaction. This Aliivibrio fischeri (strain MJ11) (Vibrio fischeri) protein is Phosphomethylpyrimidine synthase.